The chain runs to 408 residues: Metacaspase-1B (408 aa).

The interval 1 to 98 (MYHRHSAPPP…PPLEAQQFGN (98 aa)) is disordered. 2 stretches are compositionally biased toward pro residues: residues 24–49 (WPPP…FPPP) and 56–66 (SPYPTPPPHSP). Residues H199 and C255 contribute to the active site.

This sequence belongs to the peptidase C14B family.

In terms of biological role, involved in cell death (apoptosis). Required for the apoptotic-like loss of membrane phospholipid asymmetry at stationary phase and facilitates growth under conditions of endoplasmic reticulum stress. The sequence is that of Metacaspase-1B (casB) from Aspergillus fumigatus (strain CBS 144.89 / FGSC A1163 / CEA10) (Neosartorya fumigata).